An 805-amino-acid polypeptide reads, in one-letter code: Mitochondrial intermediate peptidase (805 aa).

A mitochondrion-targeting transit peptide spans 1–25; the sequence is MIQPLVKASRPRLWVCSDCLLRRTL. A Zn(2+)-binding site is contributed by His578. Glu579 is an active-site residue. Residues His582 and His585 each contribute to the Zn(2+) site.

The protein belongs to the peptidase M3 family. Requires Zn(2+) as cofactor.

It localises to the mitochondrion matrix. It catalyses the reaction Release of an N-terminal octapeptide as second stage of processing of some proteins imported into the mitochondrion.. Its function is as follows. Cleaves proteins, imported into the mitochondrion, to their mature size. While most mitochondrial precursor proteins are processed to the mature form in one step by mitochondrial processing peptidase (MPP), the sequential cleavage by MIP of an octapeptide after initial processing by MPP is a required step for a subgroup of nuclear-encoded precursor proteins destined for the matrix or the inner membrane. This is Mitochondrial intermediate peptidase (oct-1) from Neurospora crassa (strain ATCC 24698 / 74-OR23-1A / CBS 708.71 / DSM 1257 / FGSC 987).